The chain runs to 101 residues: Apolipoprotein C-II (101 aa).

The first 22 residues, 1–22, serve as a signal peptide directing secretion; that stretch reads MGTRFLLALCLVLLVLGFEVQG. The interval 66–74 is lipid binding; sequence AVDEKLRDL. The interval 78–101 is lipoprotein lipase cofactor; sequence STAAMSTYTGIFTDQVLSVLKGEE.

It belongs to the apolipoprotein C2 family. In terms of processing, proapolipoprotein C-II is synthesized as a sialic acid containing glycoprotein which is subsequently desialylated prior to its proteolytic processing. Proapolipoprotein C-II, the major form found in plasma undergoes proteolytic cleavage of its N-terminal hexapeptide to generate apolipoprotein C-II, which occurs as the minor form in plasma.

The protein resides in the secreted. In terms of biological role, component of chylomicrons, very low-density lipoproteins (VLDL), low-density lipoproteins (LDL), and high-density lipoproteins (HDL) in plasma. Plays an important role in lipoprotein metabolism as an activator of lipoprotein lipase. Both proapolipoprotein C-II and apolipoprotein C-II can activate lipoprotein lipase. The sequence is that of Apolipoprotein C-II (APOC2) from Macaca fascicularis (Crab-eating macaque).